The following is a 314-amino-acid chain: Ecto-ADP-ribosyltransferase 4 (314 aa).

The signal sequence occupies residues 1 to 46 (MGPLINRCKKILLPTTVPPATMRIWLLGGPLPFLLLLSGLQRPTEG). 2 cysteine pairs are disulfide-bonded: cysteine 69–cysteine 280 and cysteine 182–cysteine 231. A TR mART core domain is found at 91–276 (KNYFRMWQKA…LQLRSTGNLS (186 aa)). Asparagine 114 carries an N-linked (GlcNAc...) asparagine glycan. An NAD(+)-binding site is contributed by tyrosine 126. N-linked (GlcNAc...) asparagine glycosylation occurs at asparagine 178. Position 206 (glutamine 206) interacts with NAD(+). Asparagine 222 carries N-linked (GlcNAc...) asparagine glycosylation. Serine 240 is an NAD(+) binding site. N-linked (GlcNAc...) asparagine glycosylation is found at asparagine 257 and asparagine 274. Alanine 285 is lipidated: GPI-anchor amidated alanine. A propeptide spans 286-314 (SSKKCIPDPIAIASLSFLTSVIIFSKSRV) (removed in mature form).

The protein belongs to the Arg-specific ADP-ribosyltransferase family.

The protein localises to the cell membrane. The enzyme catalyses L-arginyl-[protein] + NAD(+) = N(omega)-(ADP-D-ribosyl)-L-arginyl-[protein] + nicotinamide + H(+). In Pan troglodytes (Chimpanzee), this protein is Ecto-ADP-ribosyltransferase 4 (ART4).